A 442-amino-acid polypeptide reads, in one-letter code: Meiotically up-regulated gene 191 protein (442 aa).

T361 is modified (phosphothreonine). Residues 416–429 (RNNPSSGESTTLPQ) show a composition bias toward polar residues. The interval 416–442 (RNNPSSGESTTLPQPSHGKKDKDCVIS) is disordered. Positions 433–442 (GKKDKDCVIS) are enriched in basic and acidic residues.

It is found in the cytoplasm. It localises to the nucleus. In terms of biological role, has a role in meiosis. This is Meiotically up-regulated gene 191 protein (mug191) from Schizosaccharomyces pombe (strain 972 / ATCC 24843) (Fission yeast).